The primary structure comprises 362 residues: 3-dehydroquinate synthase (362 aa).

NAD(+) is bound by residues 71 to 76, 105 to 109, 129 to 130, lysine 142, lysine 151, and 169 to 172; these read DGEKYK, GVIGD, TT, and CLKT. Positions 184, 247, and 264 each coordinate Zn(2+).

This sequence belongs to the sugar phosphate cyclases superfamily. Dehydroquinate synthase family. Co(2+) is required as a cofactor. Requires Zn(2+) as cofactor. It depends on NAD(+) as a cofactor.

It localises to the cytoplasm. It catalyses the reaction 7-phospho-2-dehydro-3-deoxy-D-arabino-heptonate = 3-dehydroquinate + phosphate. It functions in the pathway metabolic intermediate biosynthesis; chorismate biosynthesis; chorismate from D-erythrose 4-phosphate and phosphoenolpyruvate: step 2/7. Catalyzes the conversion of 3-deoxy-D-arabino-heptulosonate 7-phosphate (DAHP) to dehydroquinate (DHQ). In Citrobacter koseri (strain ATCC BAA-895 / CDC 4225-83 / SGSC4696), this protein is 3-dehydroquinate synthase.